The following is a 208-amino-acid chain: CD209 antigen-like protein E (208 aa).

Residues 1-16 (MRAPQMGSLGFLDKGH) lie on the Cytoplasmic side of the membrane. The chain crosses the membrane as a helical; Signal-anchor for type II membrane protein span at residues 17–37 (IPLVLQLLFLILFTGLLVAII). The Extracellular portion of the chain corresponds to 38–208 (IQVSKMPSSE…KIATTCLSKW (171 aa)). Intrachain disulfides connect Cys77–Cys88, Cys105–Cys197, and Cys176–Cys189. A C-type lectin domain is found at 83–198 (FFNGNCYFFS…CEQRKFWICK (116 aa)).

The protein resides in the membrane. Its function is as follows. Putative pathogen-recognition receptor. May mediate the endocytosis of pathogens which are subsequently degraded in lysosomal compartments. This chain is CD209 antigen-like protein E (Cd209e), found in Mus musculus (Mouse).